A 148-amino-acid chain; its full sequence is MSQTPFWQQKTLAEMSEQEWESLCDGCGQCCLNKLIDEDTDEIYFTNVACDQLNIKSCQCRNYERRFELEEDCIKLTRENLTTFDWLPPTCAYRLIGEGKPLFSWHPLVSGSKAAMHGERITVRHIAVRESEVVDWQDHIMNKPSWAR.

This sequence belongs to the UPF0260 family.

This is UPF0260 protein Spro_2751 from Serratia proteamaculans (strain 568).